The sequence spans 225 residues: C-reactive protein (225 aa).

The first 19 residues, 1–19 (MEKLLWCLLIMISFSRTFG), serve as a signal peptide directing secretion. The Pentraxin (PTX) domain maps to 24-225 (FKKAFVFPKE…DVFIKPQLWS (202 aa)). Cysteines 55 and 116 form a disulfide. Residues Asn80, Glu157, Gln158, Asp159, and Gln169 each contribute to the Ca(2+) site.

The protein belongs to the pentraxin family. In terms of assembly, homopentamer. Pentraxin (or pentaxin) have a discoid arrangement of 5 non-covalently bound subunits. Interacts with FCN1; may regulate monocyte activation by FCN1. Requires Ca(2+) as cofactor. Found in plasma.

It localises to the secreted. Displays several functions associated with host defense: it promotes agglutination, bacterial capsular swelling, phagocytosis and complement fixation through its calcium-dependent binding to phosphorylcholine. Can interact with DNA and histones and may scavenge nuclear material released from damaged circulating cells. The chain is C-reactive protein (Crp) from Mus musculus (Mouse).